Consider the following 427-residue polypeptide: uncharacterized protein (427 aa).

It belongs to the CAF1 family.

This is an uncharacterized protein from Schizosaccharomyces pombe (strain 972 / ATCC 24843) (Fission yeast).